The chain runs to 514 residues: ATP synthase subunit alpha (514 aa).

170–177 (GDRQIGKT) provides a ligand contact to ATP.

Belongs to the ATPase alpha/beta chains family. In terms of assembly, F-type ATPases have 2 components, CF(1) - the catalytic core - and CF(0) - the membrane proton channel. CF(1) has five subunits: alpha(3), beta(3), gamma(1), delta(1), epsilon(1). CF(0) has three main subunits: a(1), b(2) and c(9-12). The alpha and beta chains form an alternating ring which encloses part of the gamma chain. CF(1) is attached to CF(0) by a central stalk formed by the gamma and epsilon chains, while a peripheral stalk is formed by the delta and b chains.

The protein localises to the cell inner membrane. The enzyme catalyses ATP + H2O + 4 H(+)(in) = ADP + phosphate + 5 H(+)(out). In terms of biological role, produces ATP from ADP in the presence of a proton gradient across the membrane. The alpha chain is a regulatory subunit. The chain is ATP synthase subunit alpha from Stutzerimonas stutzeri (strain A1501) (Pseudomonas stutzeri).